The following is a 217-amino-acid chain: MSQPATHSDAEPATRLVLEQLSCERDDRLLFSGLSFTASAGEIWQITGANGAGKTTLLRILVGLHGFYEGERQWWQPQWQQQLLYLGHEPGVREELNPLENLRYACALSQQGGDPMAALAAVGLQGFEEVPAAHLSAGQKRRIALARLWLDRKAVWVLDEPYTAIDQDGVAALDQQIQQAAEAGTLVIYTSHHQVGDGVRRLHLAHGQAEVTEGGRV.

The 199-residue stretch at 16-214 (LVLEQLSCER…AHGQAEVTEG (199 aa)) folds into the ABC transporter domain. Position 48 to 55 (48 to 55 (GANGAGKT)) interacts with ATP.

It belongs to the ABC transporter superfamily. CcmA exporter (TC 3.A.1.107) family. The complex is composed of two ATP-binding proteins (CcmA) and two transmembrane proteins (CcmB).

Its subcellular location is the cell inner membrane. The enzyme catalyses heme b(in) + ATP + H2O = heme b(out) + ADP + phosphate + H(+). Part of the ABC transporter complex CcmAB involved in the biogenesis of c-type cytochromes; once thought to export heme, this seems not to be the case, but its exact role is uncertain. Responsible for energy coupling to the transport system. The sequence is that of Cytochrome c biogenesis ATP-binding export protein CcmA from Alcanivorax borkumensis (strain ATCC 700651 / DSM 11573 / NCIMB 13689 / SK2).